Here is a 445-residue protein sequence, read N- to C-terminus: Competence protein E (445 aa).

An N-terminal signal peptide occupies residues 1-23 (MKKYFLKCGYFLVCFCLPLIVFA).

The protein belongs to the bacterial secretin family. PilQ subfamily.

It localises to the cell outer membrane. Its function is as follows. Involved in transformation (genetic competence for DNA uptake). In Haemophilus influenzae (strain ATCC 51907 / DSM 11121 / KW20 / Rd), this protein is Competence protein E (comE).